Here is a 107-residue protein sequence, read N- to C-terminus: Phosphoribosyl-ATP pyrophosphatase (107 aa).

This sequence belongs to the PRA-PH family.

Its subcellular location is the cytoplasm. It catalyses the reaction 1-(5-phospho-beta-D-ribosyl)-ATP + H2O = 1-(5-phospho-beta-D-ribosyl)-5'-AMP + diphosphate + H(+). The protein operates within amino-acid biosynthesis; L-histidine biosynthesis; L-histidine from 5-phospho-alpha-D-ribose 1-diphosphate: step 2/9. This is Phosphoribosyl-ATP pyrophosphatase from Sinorhizobium fredii (strain NBRC 101917 / NGR234).